The following is a 365-amino-acid chain: MSLTRLHIETFRNISSAQLHPSDGLNLIYGQNGSGKTSVLEAIYFLGMGRSFRSHLSQRVIQHQDDKLTLFANLSLGEQESKIGLRRFRSGETEVKINGDKIKRLSTLAETLPIQVITPESFSLLFEGPKSRRQFIDWGAFHSDKSFHSAWANVKRILKQRNQLLKNQVSYSQIQFWDKELVRYSELVTLIRKEYVDSLNEQLKGIIVEFLPQVEVKVSFTRGWDSKTDFGQLLETQYLRDVAAGNTGSGPHKADLRLRVGTLPVQDALSRGQLKLLVCALRIAQGKLLKQQTDKNSIYLVDDLPSELDAKHRQLLLQQLMDTGAQIFVTAIDPAAIVDSLTTPPSKMFHVEQGCVTVIDKPTRE.

Residue 30–37 participates in ATP binding; sequence GQNGSGKT.

The protein belongs to the RecF family.

The protein resides in the cytoplasm. Its function is as follows. The RecF protein is involved in DNA metabolism; it is required for DNA replication and normal SOS inducibility. RecF binds preferentially to single-stranded, linear DNA. It also seems to bind ATP. The chain is DNA replication and repair protein RecF from Shewanella woodyi (strain ATCC 51908 / MS32).